The primary structure comprises 507 residues: ATP synthase subunit alpha (507 aa).

ATP is bound at residue Gly168–Thr175.

The protein belongs to the ATPase alpha/beta chains family. F-type ATPases have 2 components, CF(1) - the catalytic core - and CF(0) - the membrane proton channel. CF(1) has five subunits: alpha(3), beta(3), gamma(1), delta(1), epsilon(1). CF(0) has three main subunits: a(1), b(2) and c(9-12). The alpha and beta chains form an alternating ring which encloses part of the gamma chain. CF(1) is attached to CF(0) by a central stalk formed by the gamma and epsilon chains, while a peripheral stalk is formed by the delta and b chains.

It localises to the cell membrane. The enzyme catalyses ATP + H2O + 4 H(+)(in) = ADP + phosphate + 5 H(+)(out). In terms of biological role, produces ATP from ADP in the presence of a proton gradient across the membrane. The alpha chain is a regulatory subunit. The polypeptide is ATP synthase subunit alpha (Mesomycoplasma hyopneumoniae (strain 232) (Mycoplasma hyopneumoniae)).